Reading from the N-terminus, the 80-residue chain is Three-finger toxin MALT0059C (80 aa).

A signal peptide spans 1-21; the sequence is MRTLLLTLVVVTIVCLDLGNS. 4 cysteine pairs are disulfide-bonded: C24-C41, C35-C60, C64-C72, and C73-C78.

This sequence belongs to the three-finger toxin family. Short-chain subfamily. In terms of tissue distribution, expressed by the venom gland.

Its subcellular location is the secreted. In terms of biological role, neurotoxin. Blocks muscular nicotinic acetylcholine receptors (nAChR). The chain is Three-finger toxin MALT0059C from Micrurus altirostris (Uruguayan coral snake).